The following is a 275-amino-acid chain: Formamidopyrimidine-DNA glycosylase (275 aa).

Pro2 acts as the Schiff-base intermediate with DNA in catalysis. Glu3 acts as the Proton donor in catalysis. Lys59 (proton donor; for beta-elimination activity) is an active-site residue. Positions 93, 112, and 153 each coordinate DNA. The segment at 238–272 (NVYDRVGKPCPRCQTAIERIVVAQRSTFFCPLCQV) adopts an FPG-type zinc-finger fold. The active-site Proton donor; for delta-elimination activity is the Arg262.

The protein belongs to the FPG family. Monomer. It depends on Zn(2+) as a cofactor.

The enzyme catalyses Hydrolysis of DNA containing ring-opened 7-methylguanine residues, releasing 2,6-diamino-4-hydroxy-5-(N-methyl)formamidopyrimidine.. It catalyses the reaction 2'-deoxyribonucleotide-(2'-deoxyribose 5'-phosphate)-2'-deoxyribonucleotide-DNA = a 3'-end 2'-deoxyribonucleotide-(2,3-dehydro-2,3-deoxyribose 5'-phosphate)-DNA + a 5'-end 5'-phospho-2'-deoxyribonucleoside-DNA + H(+). In terms of biological role, involved in base excision repair of DNA damaged by oxidation or by mutagenic agents. Acts as a DNA glycosylase that recognizes and removes damaged bases. Has a preference for oxidized purines, such as 7,8-dihydro-8-oxoguanine (8-oxoG). Has AP (apurinic/apyrimidinic) lyase activity and introduces nicks in the DNA strand. Cleaves the DNA backbone by beta-delta elimination to generate a single-strand break at the site of the removed base with both 3'- and 5'-phosphates. In Chloroflexus aggregans (strain MD-66 / DSM 9485), this protein is Formamidopyrimidine-DNA glycosylase.